The sequence spans 288 residues: Pirin-like protein CC_3178 (288 aa).

This sequence belongs to the pirin family.

This chain is Pirin-like protein CC_3178, found in Caulobacter vibrioides (strain ATCC 19089 / CIP 103742 / CB 15) (Caulobacter crescentus).